The primary structure comprises 286 residues: Hypersensitive-induced response protein 1 (286 aa).

Residue Gly-2 is the site of N-myristoyl glycine attachment. Residues 114 to 190 adopt a coiled-coil conformation; the sequence is LDDVFEQKND…EKILQIKRAE (77 aa).

In terms of assembly, self-interacts and forms heteromers. Interacts with NB-LRR class of R proteins before R proteins (e.g. RPS2 or RPM1) are activated by the effectors. Interacts with LRR1.

It localises to the cell membrane. Its function is as follows. Positive regulator of hypersensitive response (HR)-like cell death. May be involved in potassium ion channel regulation. This Arabidopsis thaliana (Mouse-ear cress) protein is Hypersensitive-induced response protein 1.